We begin with the raw amino-acid sequence, 327 residues long: Apoptosis facilitator Bcl-2-like protein 14 (327 aa).

Serine 44 is subject to Phosphoserine. The short motif at 212–226 (IVELLKYSGDQLERK) is the BH3 element. The BH2 signature appears at 308 to 315 (WIQQHGGW).

Belongs to the Bcl-2 family. Post-translationally, phosphorylated by MELK, leading to inhibit its pro-apoptotic function. In terms of tissue distribution, isoform 1 is widely expressed. Isoform 2 is testis-specific.

Its subcellular location is the cytoplasm. The protein localises to the cytosol. It is found in the endomembrane system. Plays a role in apoptosis. The chain is Apoptosis facilitator Bcl-2-like protein 14 (BCL2L14) from Homo sapiens (Human).